Consider the following 405-residue polypeptide: L-rhamnonate dehydratase (405 aa).

2 residues coordinate substrate: H33 and R59. 3 residues coordinate Mg(2+): D226, E252, and E280. The active-site Proton acceptor is the H329. Substrate is bound at residue E349.

Belongs to the mandelate racemase/muconate lactonizing enzyme family. RhamD subfamily. Homooctamer; tetramer of dimers. Mg(2+) serves as cofactor.

It carries out the reaction L-rhamnonate = 2-dehydro-3-deoxy-L-rhamnonate + H2O. In terms of biological role, catalyzes the dehydration of L-rhamnonate to 2-keto-3-deoxy-L-rhamnonate (KDR). In Escherichia coli O9:H4 (strain HS), this protein is L-rhamnonate dehydratase.